Consider the following 937-residue polypeptide: Diacylglycerol kinase theta (937 aa).

The disordered stretch occupies residues 1-48 (MATAAESGARTWPGSGSPRLGSPAGSPVLGISGRARPGSGPERTGRAI). Residues Ser22 and Ser26 each carry the phosphoserine modification. 3 Phorbol-ester/DAG-type zinc fingers span residues 54 to 102 (GHSF…KTPC), 115 to 162 (AHCF…CSDC), and 177 to 228 (HHHW…TPEC). Residues 359-378 (GKAGTTEEETSKDSGPGDSV) form a disordered region. Residues 390–489 (TQEILKIYPD…TRFYVAEARA (100 aa)) enclose the Ras-associating domain. 2 consecutive short sequence motifs (LXXLL motif) follow at residues 550 to 554 (LYMLA) and 569 to 573 (LPDVL). The region spanning 579 to 716 (PDCCPLLVFV…MDRWTILLDA (138 aa)) is the DAGKc domain. The disordered stretch occupies residues 911–937 (AKQKPRKAGAIRDTRVDTLPAPEGNPL).

The protein belongs to the eukaryotic diacylglycerol kinase family. Interacts with RHOA (constitutively activated, GTP-bound); the interaction inhibits DGKQ. Interacts with PRKCE. Interacts with PRKCH. Interacts with PLCB1. Interacts with NR5A1; the interaction requires both LXXLL motifs in DGKQ and is required for full phosphatidic acid-mediated activation of NR5A1. Post-translationally, phosphorylated by PRKCE and PRKCH in vitro. As to expression, widely expressed with higher expression in the brain and, to a lesser extent, in the small intestine, duodenum, and liver. In brain, expressed in gray matter. Expression is most intense in the cerebellar cortex and hippocampus, while moderate expression is seen in the olfactory bulb neuronal layers and brain stem nuclei. In the cerebellar cortex, equally expressed in both the Purkinje cell somata and the granule cells.

The protein localises to the cytoplasm. It is found in the cytosol. Its subcellular location is the cell membrane. It localises to the synapse. The protein resides in the cytoskeleton. The protein localises to the nucleus. It is found in the nucleus speckle. Its subcellular location is the nucleus matrix. The catalysed reaction is a 1,2-diacyl-sn-glycerol + ATP = a 1,2-diacyl-sn-glycero-3-phosphate + ADP + H(+). It catalyses the reaction a 1-O-alkyl-sn-glycerol + ATP = a 1-O-alkyl-sn-glycero-3-phosphate + ADP + H(+). The enzyme catalyses 1-O-alkyl-2-acyl-sn-glycerol + ATP = 1-O-alkyl-2-acyl-sn-glycero-3-phosphate + ADP + H(+). It carries out the reaction 1,2-di-(9Z-octadecenoyl)-sn-glycerol + ATP = 1,2-di-(9Z-octadecenoyl)-sn-glycero-3-phosphate + ADP + H(+). The catalysed reaction is 1-O-hexadecyl-sn-glycerol + ATP = 1-O-hexadecyl-sn-glycero-3-phosphate + ADP + H(+). It catalyses the reaction 1-O-hexadecyl-2-acetyl-sn-glycerol + ATP = 1-O-hexadecyl-2-acetyl-sn-glycero-3-phosphate + ADP + H(+). The enzyme catalyses 1-octadecanoyl-2-(5Z,8Z,11Z,14Z-eicosatetraenoyl)-sn-glycerol + ATP = 1-octadecanoyl-2-(5Z,8Z,11Z,14Z-eicosatetraenoyl)-sn-glycero-3-phosphate + ADP + H(+). It functions in the pathway lipid metabolism; glycerolipid metabolism. With respect to regulation, activated by phosphatidylserine. In terms of biological role, diacylglycerol kinase that converts diacylglycerol/DAG into phosphatidic acid/phosphatidate/PA and regulates the respective levels of these two bioactive lipids. Thereby, acts as a central switch between the signaling pathways activated by these second messengers with different cellular targets and opposite effects in numerous biological processes. Within the adrenocorticotropic hormone signaling pathway, produces phosphatidic acid which in turn activates NR5A1 and subsequent steroidogenic gene transcription. Also functions downstream of the nerve growth factor signaling pathway being specifically activated in the nucleus by the growth factor. Through its diacylglycerol activity also regulates synaptic vesicle endocytosis. This chain is Diacylglycerol kinase theta, found in Rattus norvegicus (Rat).